A 159-amino-acid polypeptide reads, in one-letter code: Endoribonuclease YbeY (159 aa).

3 residues coordinate Zn(2+): His125, His129, and His135.

It belongs to the endoribonuclease YbeY family. Zn(2+) serves as cofactor.

Its subcellular location is the cytoplasm. Single strand-specific metallo-endoribonuclease involved in late-stage 70S ribosome quality control and in maturation of the 3' terminus of the 16S rRNA. This Enterococcus faecalis (strain ATCC 700802 / V583) protein is Endoribonuclease YbeY.